A 518-amino-acid chain; its full sequence is Protein translocase subunit SecD (518 aa).

6 helical membrane-spanning segments follow: residues 9–29, 361–381, 384–404, 406–426, 452–474, and 486–506; these read IFLS…NFMQ, LIGF…LGLF, IALS…QATL, LPGI…NVLI, FATI…IFGV, and IGII…IDIW.

It belongs to the SecD/SecF family. SecD subfamily. In terms of assembly, forms a complex with SecF. Part of the essential Sec protein translocation apparatus which comprises SecA, SecYEG and auxiliary proteins SecDF-YajC and YidC.

The protein resides in the cell inner membrane. Functionally, part of the Sec protein translocase complex. Interacts with the SecYEG preprotein conducting channel. SecDF uses the proton motive force (PMF) to complete protein translocation after the ATP-dependent function of SecA. The polypeptide is Protein translocase subunit SecD (Rickettsia felis (strain ATCC VR-1525 / URRWXCal2) (Rickettsia azadi)).